A 292-amino-acid polypeptide reads, in one-letter code: uncharacterized protein (292 aa).

Residues Thr43 and Tyr105 each act as charge relay system in the active site. The active-site Proton donor is Tyr131. Lys159 (schiff-base intermediate with substrate) is an active-site residue.

The protein belongs to the DapA family. As to quaternary structure, homotetramer.

It is found in the cytoplasm. This is an uncharacterized protein from Thermococcus kodakarensis (strain ATCC BAA-918 / JCM 12380 / KOD1) (Pyrococcus kodakaraensis (strain KOD1)).